A 902-amino-acid chain; its full sequence is MMASLSCVEDKMKTSCLVNGGGTITTTTSQSTLLEEMKLLKDQSGTRKPVINSELWHACAGPLVCLPQVGSLVYYFSQGHSEQVAVSTRRSATTQVPNYPNLPSQLMCQVHNVTLHADKDSDEIYAQMSLQPVHSERDVFPVPDFGMLRGSKHPTEFFCKTLTASDTSTHGGFSVPRRAAEKLFPPLDYSAQPPTQELVVRDLHENTWTFRHIYRGQPKRHLLTTGWSLFVGSKRLRAGDSVLFIRDEKSQLMVGVRRANRQQTALPSSVLSADSMHIGVLAAAAHATANRTPFLIFYNPRACPAEFVIPLAKYRKAICGSQLSVGMRFGMMFETEDSGKRRYMGTIVGISDLDPLRWPGSKWRNLQVEWDEPGCNDKPTRVSPWDIETPESLFIFPSLTSGLKRQLHPSYFAGETEWGSLIKRPLIRVPDSANGIMPYASFPSMASEQLMKMMMRPHNNQNVPSFMSEMQQNIVMGNGGLLGDMKMQQPLMMNQKSEMVQPQNKLTVNPSASNTSGQEQNLSQSMSAPAKPENSTLSGCSSGRVQHGLEQSMEQASQVTTSTVCNEEKVNQLLQKPGASSPVQADQCLDITHQIYQPQSDPINGFSFLETDELTSQVSSFQSLAGSYKQPFILSSQDSSAVVLPDSTNSPLFHDVWDTQLNGLKFDQFSPLMQQDLYASQNICMSNSTTSNILDPPLSNTVLDDFCAIKDTDFQNHPSGCLVGNNNTSFAQDVQSQITSASFADSQAFSRQDFPDNSGGTGTSSSNVDFDDCSLRQNSKGSSWQKIATPRVRTYTKVQKTGSVGRSIDVTSFKDYEELKSAIECMFGLEGLLTHPQSSGWKLVYVDYESDVLLVGDDPWEEFVGCVRCIRILSPTEVQQMSEEGMKLLNSAGINDLKTSVS.

Residues 158 to 260 (FCKTLTASDT…QLMVGVRRAN (103 aa)) constitute a DNA-binding region (TF-B3). Residues 497–543 (SEMVQPQNKLTVNPSASNTSGQEQNLSQSMSAPAKPENSTLSGCSSG) are disordered. The region spanning 793–877 (RTYTKVQKTG…RCIRILSPTE (85 aa)) is the PB1 domain.

Belongs to the ARF family. As to quaternary structure, homodimers and heterodimers. Interacts with BRX and the auxin-responsive proteins IAA1, IAA12 (BODENLOS), IAA17 and ARF7. Expressed in the whole plant with a lower expression in leaves. Detected in embryo axis, provascular tissues, procambium and some differentiated vascular regions of mature organs.

The protein localises to the nucleus. In terms of biological role, auxin response factors (ARFs) are transcriptional factors that bind specifically to the DNA sequence 5'-TGTCTC-3' found in the auxin-responsive promoter elements (AuxREs). Seems to act as transcriptional activator. Formation of heterodimers with Aux/IAA proteins may alter their ability to modulate early auxin response genes expression. Mediates embryo axis formation and vascular tissues differentiation. Functionally redundant with ARF7. May be necessary to counteract AMP1 activity. The sequence is that of Auxin response factor 5 (ARF5) from Arabidopsis thaliana (Mouse-ear cress).